Consider the following 640-residue polypeptide: Chaperone protein DnaK (640 aa).

T196 carries the post-translational modification Phosphothreonine; by autocatalysis. Over residues 547–569 (GDKIPSDKRPALEGALEKLKDAT) the composition is skewed to basic and acidic residues. 2 disordered regions span residues 547–575 (GDKIPSDKRPALEGALEKLKDATKNGTTE) and 595–640 (LYQA…GNGK). Residues 603–615 (TNASEPTQNTDGS) show a composition bias toward polar residues. Residues 625–634 (GEVENAEFEV) show a composition bias toward acidic residues.

The protein belongs to the heat shock protein 70 family.

In terms of biological role, acts as a chaperone. The sequence is that of Chaperone protein DnaK from Chlorobium phaeobacteroides (strain DSM 266 / SMG 266 / 2430).